Reading from the N-terminus, the 303-residue chain is UDP-3-O-acyl-N-acetylglucosamine deacetylase (303 aa).

Histidine 78, histidine 237, and aspartate 241 together coordinate Zn(2+). The active-site Proton donor is the histidine 264.

This sequence belongs to the LpxC family. It depends on Zn(2+) as a cofactor.

It catalyses the reaction a UDP-3-O-[(3R)-3-hydroxyacyl]-N-acetyl-alpha-D-glucosamine + H2O = a UDP-3-O-[(3R)-3-hydroxyacyl]-alpha-D-glucosamine + acetate. Its pathway is glycolipid biosynthesis; lipid IV(A) biosynthesis; lipid IV(A) from (3R)-3-hydroxytetradecanoyl-[acyl-carrier-protein] and UDP-N-acetyl-alpha-D-glucosamine: step 2/6. In terms of biological role, catalyzes the hydrolysis of UDP-3-O-myristoyl-N-acetylglucosamine to form UDP-3-O-myristoylglucosamine and acetate, the committed step in lipid A biosynthesis. In Pseudomonas savastanoi pv. phaseolicola (strain 1448A / Race 6) (Pseudomonas syringae pv. phaseolicola (strain 1448A / Race 6)), this protein is UDP-3-O-acyl-N-acetylglucosamine deacetylase.